Here is a 105-residue protein sequence, read N- to C-terminus: Large ribosomal subunit protein uL24 (105 aa).

It belongs to the universal ribosomal protein uL24 family. Part of the 50S ribosomal subunit.

Functionally, one of two assembly initiator proteins, it binds directly to the 5'-end of the 23S rRNA, where it nucleates assembly of the 50S subunit. One of the proteins that surrounds the polypeptide exit tunnel on the outside of the subunit. The protein is Large ribosomal subunit protein uL24 of Mycobacterium avium (strain 104).